Reading from the N-terminus, the 289-residue chain is tRNA-cytidine(32) 2-sulfurtransferase (289 aa).

A PP-loop motif motif is present at residues 39–44; the sequence is SGGKDS. Residues C114, C117, and C205 each coordinate [4Fe-4S] cluster.

It belongs to the TtcA family. Homodimer. The cofactor is Mg(2+). [4Fe-4S] cluster is required as a cofactor.

It is found in the cytoplasm. It catalyses the reaction cytidine(32) in tRNA + S-sulfanyl-L-cysteinyl-[cysteine desulfurase] + AH2 + ATP = 2-thiocytidine(32) in tRNA + L-cysteinyl-[cysteine desulfurase] + A + AMP + diphosphate + H(+). Its pathway is tRNA modification. Catalyzes the ATP-dependent 2-thiolation of cytidine in position 32 of tRNA, to form 2-thiocytidine (s(2)C32). The sulfur atoms are provided by the cysteine/cysteine desulfurase (IscS) system. In Deinococcus geothermalis (strain DSM 11300 / CIP 105573 / AG-3a), this protein is tRNA-cytidine(32) 2-sulfurtransferase.